Here is a 206-residue protein sequence, read N- to C-terminus: Proteasome subunit beta type-2 (206 aa).

The protein belongs to the peptidase T1B family. The 26S proteasome consists of a 20S proteasome core and two 19S regulatory subunits. The 20S proteasome core is composed of 28 subunits that are arranged in four stacked rings, resulting in a barrel-shaped structure. The two end rings are each formed by seven alpha subunits, and the two central rings are each formed by seven beta subunits. The catalytic chamber with the active sites is on the inside of the barrel.

Its subcellular location is the cytoplasm. The protein resides in the nucleus. In terms of biological role, non-catalytic component of the proteasome, a multicatalytic proteinase complex which is characterized by its ability to cleave peptides with Arg, Phe, Tyr, Leu, and Glu adjacent to the leaving group at neutral or slightly basic pH. The proteasome has an ATP-dependent proteolytic activity. This chain is Proteasome subunit beta type-2 (PSB4), found in Trypanosoma brucei brucei.